The primary structure comprises 440 residues: Adenylosuccinate synthetase 1, chloroplastic (440 aa).

Residues 13-19 (GDEGKGK) and 41-43 (GHT) contribute to the GTP site. The active-site Proton acceptor is Asp14. Mg(2+) is bound by residues Asp14 and Gly41. IMP contacts are provided by residues 14 to 17 (DEGK), 39 to 42 (NAGH), Thr135, Arg149, Gln230, Thr245, and Arg313. His42 acts as the Proton donor in catalysis. 309–315 (TVTRRKR) provides a ligand contact to substrate. Residues Arg315 and 341 to 343 (KLD) each bind GTP.

This sequence belongs to the adenylosuccinate synthetase family. As to quaternary structure, homodimer. Mg(2+) is required as a cofactor.

The protein resides in the plastid. Its subcellular location is the chloroplast. The catalysed reaction is IMP + L-aspartate + GTP = N(6)-(1,2-dicarboxyethyl)-AMP + GDP + phosphate + 2 H(+). The protein operates within purine metabolism; AMP biosynthesis via de novo pathway; AMP from IMP: step 1/2. Functionally, plays an important role in the de novo pathway and in the salvage pathway of purine nucleotide biosynthesis. Catalyzes the first committed step in the biosynthesis of AMP from IMP. The protein is Adenylosuccinate synthetase 1, chloroplastic of Ricinus communis (Castor bean).